A 261-amino-acid polypeptide reads, in one-letter code: tRNA pseudouridine synthase A (261 aa).

Residue Asp51 is the Nucleophile of the active site. Residue Tyr109 participates in substrate binding.

This sequence belongs to the tRNA pseudouridine synthase TruA family. Homodimer.

The enzyme catalyses uridine(38/39/40) in tRNA = pseudouridine(38/39/40) in tRNA. Functionally, formation of pseudouridine at positions 38, 39 and 40 in the anticodon stem and loop of transfer RNAs. In Shewanella sp. (strain MR-4), this protein is tRNA pseudouridine synthase A.